The chain runs to 163 residues: UPF0763 protein C8J_0930 (163 aa).

The protein belongs to the UPF0763 family.

In Campylobacter jejuni subsp. jejuni serotype O:6 (strain 81116 / NCTC 11828), this protein is UPF0763 protein C8J_0930.